A 285-amino-acid chain; its full sequence is ATP synthase gamma chain (285 aa).

It belongs to the ATPase gamma chain family. In terms of assembly, F-type ATPases have 2 components, CF(1) - the catalytic core - and CF(0) - the membrane proton channel. CF(1) has five subunits: alpha(3), beta(3), gamma(1), delta(1), epsilon(1). CF(0) has three main subunits: a, b and c.

It is found in the cell membrane. In terms of biological role, produces ATP from ADP in the presence of a proton gradient across the membrane. The gamma chain is believed to be important in regulating ATPase activity and the flow of protons through the CF(0) complex. The sequence is that of ATP synthase gamma chain from Geobacillus kaustophilus (strain HTA426).